The sequence spans 282 residues: Pantothenate synthetase (282 aa).

30–37 contributes to the ATP binding site; that stretch reads MGALHAGH. Histidine 37 serves as the catalytic Proton donor. (R)-pantoate is bound at residue glutamine 61. Beta-alanine is bound at residue glutamine 61. 147-150 is an ATP binding site; it reads GEKD. Glutamine 153 provides a ligand contact to (R)-pantoate. Residues valine 177 and 185 to 188 each bind ATP; that span reads LSSR.

It belongs to the pantothenate synthetase family. Homodimer.

It is found in the cytoplasm. It catalyses the reaction (R)-pantoate + beta-alanine + ATP = (R)-pantothenate + AMP + diphosphate + H(+). Its pathway is cofactor biosynthesis; (R)-pantothenate biosynthesis; (R)-pantothenate from (R)-pantoate and beta-alanine: step 1/1. Functionally, catalyzes the condensation of pantoate with beta-alanine in an ATP-dependent reaction via a pantoyl-adenylate intermediate. The protein is Pantothenate synthetase of Phocaeicola vulgatus (strain ATCC 8482 / DSM 1447 / JCM 5826 / CCUG 4940 / NBRC 14291 / NCTC 11154) (Bacteroides vulgatus).